The following is a 348-amino-acid chain: Organic solute transporter alpha-like protein 3 (348 aa).

Residues Met-1 to Val-49 are Extracellular-facing. Asn-26 carries an N-linked (GlcNAc...) asparagine glycan. The helical transmembrane segment at Leu-50–Phe-70 threads the bilayer. Over Tyr-71–Lys-84 the chain is Cytoplasmic. The helical transmembrane segment at Leu-85 to Val-105 threads the bilayer. Residues Pro-106–Ala-109 lie on the Extracellular side of the membrane. The helical transmembrane segment at Val-110–Leu-130 threads the bilayer. Residues Ala-131 to Glu-180 lie on the Cytoplasmic side of the membrane. Residues Trp-181–Val-201 form a helical membrane-spanning segment. Over Ala-202 to Arg-213 the chain is Extracellular. Residues Tyr-214–Ala-234 form a helical membrane-spanning segment. The Cytoplasmic segment spans residues Arg-235 to Lys-240. Residues Leu-241–Ser-261 form a helical membrane-spanning segment. Residues Ala-262–Tyr-291 lie on the Extracellular side of the membrane. The chain crosses the membrane as a helical span at residues Phe-292 to Leu-312. Residues Leu-313–His-348 are Cytoplasmic-facing.

Belongs to the OST-alpha family.

The protein resides in the cell membrane. Functionally, probable transporter. The protein is Organic solute transporter alpha-like protein 3 (osta-3) of Caenorhabditis elegans.